An 89-amino-acid polypeptide reads, in one-letter code: Small ribosomal subunit protein uS15 (89 aa).

It belongs to the universal ribosomal protein uS15 family. Part of the 30S ribosomal subunit. Forms a bridge to the 50S subunit in the 70S ribosome, contacting the 23S rRNA.

One of the primary rRNA binding proteins, it binds directly to 16S rRNA where it helps nucleate assembly of the platform of the 30S subunit by binding and bridging several RNA helices of the 16S rRNA. Its function is as follows. Forms an intersubunit bridge (bridge B4) with the 23S rRNA of the 50S subunit in the ribosome. The polypeptide is Small ribosomal subunit protein uS15 (Saccharopolyspora erythraea (strain ATCC 11635 / DSM 40517 / JCM 4748 / NBRC 13426 / NCIMB 8594 / NRRL 2338)).